Here is a 179-residue protein sequence, read N- to C-terminus: MTKQPDEWLDDVPDNDEEDEEIIWVSKSEIKRDAEELKRLGAELMELGSNSLDRIPLDEDLRSAIELAQKIKKEGRRRQMQLIGKMLRSRDEEPIRTALDKLKNRHNQQVALFHKLEMMRDRLVEQGDEAVAEVLALYPNADRQQLRAMIRNAQKEKAGNKPPKAYRQIFQYLRELAEA.

Belongs to the DarP family.

It is found in the cytoplasm. Functionally, member of a network of 50S ribosomal subunit biogenesis factors which assembles along the 30S-50S interface, preventing incorrect 23S rRNA structures from forming. Promotes peptidyl transferase center (PTC) maturation. The polypeptide is Dual-action ribosomal maturation protein DarP (Erwinia tasmaniensis (strain DSM 17950 / CFBP 7177 / CIP 109463 / NCPPB 4357 / Et1/99)).